A 284-amino-acid chain; its full sequence is Orotidine 5'-phosphate decarboxylase (284 aa).

Catalysis depends on lysine 95, which acts as the Proton donor.

The protein belongs to the OMP decarboxylase family. Type 2 subfamily.

It carries out the reaction orotidine 5'-phosphate + H(+) = UMP + CO2. It functions in the pathway pyrimidine metabolism; UMP biosynthesis via de novo pathway; UMP from orotate: step 2/2. This is Orotidine 5'-phosphate decarboxylase from Leptothrix cholodnii (strain ATCC 51168 / LMG 8142 / SP-6) (Leptothrix discophora (strain SP-6)).